The primary structure comprises 254 residues: H-2 class II histocompatibility antigen, I-E alpha chain (254 aa).

A signal peptide spans 1–24 (RSRALILGVLALTTMLSLCGGEDD). The segment at 25–109 (IEADHVAFYG…KDSNFTPAAN (85 aa)) is alpha-1. At 25–216 (IEADHVAFYG…IPAPMSELTE (192 aa)) the chain is on the extracellular side. Asn103 and Asn143 each carry an N-linked (GlcNAc...) asparagine glycan. The interval 110–203 (EAPQATVFPK…GLEEPVLKHW (94 aa)) is alpha-2. Residues 112–204 (PQATVFPKSP…LEEPVLKHWE (93 aa)) form the Ig-like C1-type domain. Cysteines 132 and 188 form a disulfide. Residues 204–216 (EPEIPAPMSELTE) are connecting peptide. A helical transmembrane segment spans residues 217–242 (TVVCALGLSVGLVGIVVGTIFIIQGL). At 243-254 (RSGGTSRHPGPL) the chain is on the cytoplasmic side.

The protein belongs to the MHC class II family.

The protein localises to the membrane. The chain is H-2 class II histocompatibility antigen, I-E alpha chain from Mus musculus (Mouse).